We begin with the raw amino-acid sequence, 265 residues long: UPF0294 protein KPK_4510 (265 aa).

Belongs to the UPF0294 family.

The protein localises to the cytoplasm. The protein is UPF0294 protein KPK_4510 of Klebsiella pneumoniae (strain 342).